The primary structure comprises 760 residues: Catecholate siderophore receptor Fiu (760 aa).

Positions 1–31 (MENNRNFPARQFHSLTFFAGLCIGITPVAQA) are cleaved as a signal peptide. A TBDR plug domain is found at 67 to 175 (PVADTTRTMT…PTGSINMISK (109 aa)). The region spanning 180 to 760 (DSGIDASASI…TFLLTANMHF (581 aa)) is the TBDR beta-barrel domain. A TonB C-terminal box motif is present at residues 743–760 (RYHPGEPRTFLLTANMHF).

The protein belongs to the TonB-dependent receptor family.

It localises to the cell outer membrane. Its function is as follows. Involved in the active transport across the outer membrane of iron complexed with catecholate siderophores such as dihydroxybenzoylserine and dihydroxybenzoate. It derives its energy for transport by interacting with the trans-periplasmic membrane protein TonB. Can also transport catechol-substituted cephalosporins. Receptor for microcins M, H47 and E492. This chain is Catecholate siderophore receptor Fiu (fiu), found in Escherichia coli O6:H1 (strain CFT073 / ATCC 700928 / UPEC).